The chain runs to 300 residues: Ribosomal protein L11 methyltransferase (300 aa).

Residues T152, G173, D195, and N234 each coordinate S-adenosyl-L-methionine.

It belongs to the methyltransferase superfamily. PrmA family.

It is found in the cytoplasm. It catalyses the reaction L-lysyl-[protein] + 3 S-adenosyl-L-methionine = N(6),N(6),N(6)-trimethyl-L-lysyl-[protein] + 3 S-adenosyl-L-homocysteine + 3 H(+). Its function is as follows. Methylates ribosomal protein L11. This is Ribosomal protein L11 methyltransferase from Burkholderia cenocepacia (strain ATCC BAA-245 / DSM 16553 / LMG 16656 / NCTC 13227 / J2315 / CF5610) (Burkholderia cepacia (strain J2315)).